The chain runs to 1451 residues: ABC transporter G family member 32 (1451 aa).

In terms of domain architecture, ABC transporter 1 spans 162 to 435 (GNALHISPTR…FELMGFRCPQ (274 aa)). 195–202 (GPPGSGKT) contributes to the ATP binding site. Residues 513-725 (ALLKANIDRE…AQNAISTNEF (213 aa)) form the ABC transmembrane type-2 1 domain. 6 helical membrane-spanning segments follow: residues 531–551 (FVYI…MTTF), 563–583 (GTIY…NGFA), 618–638 (IPVT…VVGF), 650–670 (LLLV…AGIG), 674–694 (VVSQ…GGFI), and 760–780 (IGFG…TVAL). The disordered stretch occupies residues 809 to 835 (ILDSCEEKKSRKKEQSQSVNQKHWNNT). Basic and acidic residues predominate over residues 813-823 (CEEKKSRKKEQ). An ABC transporter 2 domain is found at 853-1105 (LSFNDIKYSV…KLIEYFEGIE (253 aa)). 898–905 (GVSGAGKT) lines the ATP pocket. Positions 1178-1392 (TQCIACLWKH…TLYGLVASQF (215 aa)) constitute an ABC transmembrane type-2 2 domain. Transmembrane regions (helical) follow at residues 1197-1217 (YTAV…TMFW), 1237-1257 (YAAV…VVVV), 1285-1305 (LPYI…MIGF), 1312-1332 (FIWY…FGMM), 1342-1362 (IAAI…GYLI), 1373-1393 (WYCW…SQFG), and 1423-1443 (LVAV…SFAI).

This sequence belongs to the ABC transporter superfamily. ABCG family. PDR (TC 3.A.1.205) subfamily.

It localises to the membrane. May be a general defense protein. This chain is ABC transporter G family member 32, found in Oryza sativa subsp. japonica (Rice).